The primary structure comprises 288 residues: Intermediate transcription factor 3 small subunit (288 aa).

This sequence belongs to the orthopoxvirus OPG134 family. In terms of assembly, heterodimer of a 45 kDa (A23R) and a 32 kDa (A8R) subunit to form the virus intermediate transcription factor (VITF)-3.

Acts with RNA polymerase to initiate transcription from intermediate gene promoters. This Homo sapiens (Human) protein is Intermediate transcription factor 3 small subunit (OPG134).